Consider the following 1229-residue polypeptide: Phosphorylase b kinase regulatory subunit alpha, liver isoform (1229 aa).

The segment covering 625–646 (DSLLEDDEEQEEEEEDKFEDDY) has biased composition (acidic residues). Residues 625–648 (DSLLEDDEEQEEEEEDKFEDDYNN) are disordered. Residues 825–855 (LEELYIQAGACKEWGLIRYISGILRKRVEVL) form a calmodulin-binding region. Residues 1024-1050 (EIKQRCSSPSTPSGILSPVGPGPADGQ) are disordered. Residues 1028–1037 (RCSSPSTPSG) are compositionally biased toward polar residues. The interval 1052 to 1092 (HWVERQGQWLRRRRLDGAINRVPVGFYQKVWKILQKCHGLS) is calmodulin-binding. Cys1226 carries S-farnesyl cysteine lipidation.

The protein belongs to the phosphorylase b kinase regulatory chain family. In terms of assembly, polymer of 16 chains, four each of alpha, beta, gamma, and delta. Alpha and beta are regulatory chains, gamma is the catalytic chain, and delta is calmodulin. In terms of processing, although the final Cys may be farnesylated, the terminal tripeptide is probably not removed, and the C-terminus is not methylated.

It is found in the cell membrane. It participates in glycan biosynthesis; glycogen metabolism. By phosphorylation of various serine residues and by calcium. Phosphorylase b kinase catalyzes the phosphorylation of serine in certain substrates, including troponin I. The alpha chain may bind calmodulin. The chain is Phosphorylase b kinase regulatory subunit alpha, liver isoform (phka2) from Takifugu rubripes (Japanese pufferfish).